The chain runs to 952 residues: Isoleucine--tRNA ligase (952 aa).

The 'HIGH' region signature appears at 58–68 (PYANGDIHIGH). Glu576 is an L-isoleucyl-5'-AMP binding site. Positions 617-621 (KMSKS) match the 'KMSKS' region motif. Lys620 is an ATP binding site. 4 residues coordinate Zn(2+): Cys915, Cys918, Cys935, and Cys938.

It belongs to the class-I aminoacyl-tRNA synthetase family. IleS type 1 subfamily. Monomer. It depends on Zn(2+) as a cofactor.

It is found in the cytoplasm. The enzyme catalyses tRNA(Ile) + L-isoleucine + ATP = L-isoleucyl-tRNA(Ile) + AMP + diphosphate. Its function is as follows. Catalyzes the attachment of isoleucine to tRNA(Ile). As IleRS can inadvertently accommodate and process structurally similar amino acids such as valine, to avoid such errors it has two additional distinct tRNA(Ile)-dependent editing activities. One activity is designated as 'pretransfer' editing and involves the hydrolysis of activated Val-AMP. The other activity is designated 'posttransfer' editing and involves deacylation of mischarged Val-tRNA(Ile). The polypeptide is Isoleucine--tRNA ligase (Aliivibrio fischeri (strain MJ11) (Vibrio fischeri)).